We begin with the raw amino-acid sequence, 286 residues long: Putative electron transfer flavoprotein subunit YgcQ (286 aa).

FAD is bound at residue 225–253 (VCIVVGASGAAALMAGVRNSKFVVAINHD).

The protein belongs to the ETF alpha-subunit/FixB family. YgcQ and YgcR form a heterodimer.

Functionally, may play a role in a redox process. This chain is Putative electron transfer flavoprotein subunit YgcQ (ygcQ), found in Escherichia coli (strain K12).